We begin with the raw amino-acid sequence, 105 residues long: Small ribosomal subunit protein uS10 (105 aa).

It belongs to the universal ribosomal protein uS10 family. As to quaternary structure, part of the 30S ribosomal subunit.

Its function is as follows. Involved in the binding of tRNA to the ribosomes. This is Small ribosomal subunit protein uS10 from Chlamydia abortus (strain DSM 27085 / S26/3) (Chlamydophila abortus).